The sequence spans 159 residues: Probable carbonic anhydrase (159 aa).

Residues 33–35 (RGD) and 48–49 (QD) contribute to the substrate site. The Zn(2+) site is built by histidine 54, histidine 71, and histidine 76.

The protein belongs to the gamma-class carbonic anhydrase family. Requires Zn(2+) as cofactor.

The enzyme catalyses hydrogencarbonate + H(+) = CO2 + H2O. Its function is as follows. Probably reversibly hydrates carbon dioxide. In Methanocaldococcus jannaschii (strain ATCC 43067 / DSM 2661 / JAL-1 / JCM 10045 / NBRC 100440) (Methanococcus jannaschii), this protein is Probable carbonic anhydrase.